Reading from the N-terminus, the 553-residue chain is Flagellar hook-associated protein 1 (553 aa).

It belongs to the flagella basal body rod proteins family.

The protein localises to the secreted. It is found in the bacterial flagellum. This Salmonella typhi protein is Flagellar hook-associated protein 1 (flgK).